The chain runs to 106 residues: Cell division topological specificity factor (106 aa).

It belongs to the MinE family.

Functionally, prevents the cell division inhibition by proteins MinC and MinD at internal division sites while permitting inhibition at polar sites. This ensures cell division at the proper site by restricting the formation of a division septum at the midpoint of the long axis of the cell. This chain is Cell division topological specificity factor, found in Prochlorococcus marinus (strain SARG / CCMP1375 / SS120).